A 140-amino-acid chain; its full sequence is Large ribosomal subunit protein bL21 (140 aa).

Residues 106–140 (SGVKPAVGARTKIEPAVKPAKAKKSEAEASAEDAN) form a disordered region.

The protein belongs to the bacterial ribosomal protein bL21 family. As to quaternary structure, part of the 50S ribosomal subunit. Contacts protein L20.

Its function is as follows. This protein binds to 23S rRNA in the presence of protein L20. This Paracoccus denitrificans (strain Pd 1222) protein is Large ribosomal subunit protein bL21.